The chain runs to 362 residues: UDP-N-acetylglucosamine--N-acetylmuramyl-(pentapeptide) pyrophosphoryl-undecaprenol N-acetylglucosamine transferase (362 aa).

UDP-N-acetyl-alpha-D-glucosamine contacts are provided by residues 14 to 16 (TGG), arginine 170, serine 199, and glutamine 289.

It belongs to the glycosyltransferase 28 family. MurG subfamily.

It localises to the cell inner membrane. The catalysed reaction is di-trans,octa-cis-undecaprenyl diphospho-N-acetyl-alpha-D-muramoyl-L-alanyl-D-glutamyl-meso-2,6-diaminopimeloyl-D-alanyl-D-alanine + UDP-N-acetyl-alpha-D-glucosamine = di-trans,octa-cis-undecaprenyl diphospho-[N-acetyl-alpha-D-glucosaminyl-(1-&gt;4)]-N-acetyl-alpha-D-muramoyl-L-alanyl-D-glutamyl-meso-2,6-diaminopimeloyl-D-alanyl-D-alanine + UDP + H(+). It participates in cell wall biogenesis; peptidoglycan biosynthesis. Its function is as follows. Cell wall formation. Catalyzes the transfer of a GlcNAc subunit on undecaprenyl-pyrophosphoryl-MurNAc-pentapeptide (lipid intermediate I) to form undecaprenyl-pyrophosphoryl-MurNAc-(pentapeptide)GlcNAc (lipid intermediate II). This chain is UDP-N-acetylglucosamine--N-acetylmuramyl-(pentapeptide) pyrophosphoryl-undecaprenol N-acetylglucosamine transferase, found in Borrelia turicatae (strain 91E135).